The following is a 233-amino-acid chain: uncharacterized protein (233 aa).

Residues 1–23 (MEIKYFLVLLVGFLLVLPSIVNP) form the signal peptide. A disordered region spans residues 42–217 (LDVNNPHNPN…HHHHQEASEC (176 aa)). Over residues 45–64 (NNPHNPNNNPHNPHNPNNNP) the composition is skewed to low complexity. The span at 65–211 (HHPHHLHHHH…HPHPHHHHHH (147 aa)) shows a compositional bias: basic residues.

Its subcellular location is the secreted. This is an uncharacterized protein from Dictyostelium discoideum (Social amoeba).